Reading from the N-terminus, the 699-residue chain is Elongation factor G (699 aa).

One can recognise a tr-type G domain in the interval 8–286 (EKLRNIGIVA…AVIVTYPLPI (279 aa)). GTP contacts are provided by residues 17-24 (AHIDAGKT), 84-88 (DTPGH), and 138-141 (NKMD).

The protein belongs to the TRAFAC class translation factor GTPase superfamily. Classic translation factor GTPase family. EF-G/EF-2 subfamily.

Its subcellular location is the cytoplasm. In terms of biological role, catalyzes the GTP-dependent ribosomal translocation step during translation elongation. During this step, the ribosome changes from the pre-translocational (PRE) to the post-translocational (POST) state as the newly formed A-site-bound peptidyl-tRNA and P-site-bound deacylated tRNA move to the P and E sites, respectively. Catalyzes the coordinated movement of the two tRNA molecules, the mRNA and conformational changes in the ribosome. The protein is Elongation factor G (fusA) of Aquifex pyrophilus.